A 526-amino-acid polypeptide reads, in one-letter code: D-arabinono-1,4-lactone oxidase (526 aa).

The 175-residue stretch at Phe22–Ala196 folds into the FAD-binding PCMH-type domain. Position 59 is a pros-8alpha-FAD histidine (His59).

This sequence belongs to the oxygen-dependent FAD-linked oxidoreductase family. FAD is required as a cofactor.

The protein localises to the mitochondrion membrane. It carries out the reaction D-arabinono-1,4-lactone + O2 = dehydro-D-arabinono-1,4-lactone + H2O2 + H(+). It functions in the pathway cofactor biosynthesis; D-erythroascorbate biosynthesis; dehydro-D-arabinono-1,4-lactone from D-arabinose: step 2/2. The sequence is that of D-arabinono-1,4-lactone oxidase (ALO1) from Yarrowia lipolytica (strain CLIB 122 / E 150) (Yeast).